Reading from the N-terminus, the 318-residue chain is GTP cyclohydrolase MptA (318 aa).

Belongs to the GTP cyclohydrolase IV family. As to quaternary structure, homodimer. Fe(2+) serves as cofactor.

The catalysed reaction is GTP + H2O = 7,8-dihydroneopterin 2',3'-cyclic phosphate + formate + diphosphate + H(+). It functions in the pathway cofactor biosynthesis; 5,6,7,8-tetrahydromethanopterin biosynthesis. In terms of biological role, converts GTP to 7,8-dihydro-D-neopterin 2',3'-cyclic phosphate, the first intermediate in the biosynthesis of coenzyme methanopterin. This chain is GTP cyclohydrolase MptA, found in Methanothermobacter thermautotrophicus (strain ATCC 29096 / DSM 1053 / JCM 10044 / NBRC 100330 / Delta H) (Methanobacterium thermoautotrophicum).